A 340-amino-acid polypeptide reads, in one-letter code: S-adenosylmethionine:tRNA ribosyltransferase-isomerase (340 aa).

It belongs to the QueA family. As to quaternary structure, monomer.

The protein localises to the cytoplasm. It catalyses the reaction 7-aminomethyl-7-carbaguanosine(34) in tRNA + S-adenosyl-L-methionine = epoxyqueuosine(34) in tRNA + adenine + L-methionine + 2 H(+). The protein operates within tRNA modification; tRNA-queuosine biosynthesis. In terms of biological role, transfers and isomerizes the ribose moiety from AdoMet to the 7-aminomethyl group of 7-deazaguanine (preQ1-tRNA) to give epoxyqueuosine (oQ-tRNA). In Campylobacter concisus (strain 13826), this protein is S-adenosylmethionine:tRNA ribosyltransferase-isomerase.